The chain runs to 682 residues: Potassium-transporting ATPase ATP-binding subunit (682 aa).

The next 4 helical transmembrane spans lie at 34–54 (PVMFVVWAGSVLTTLLTLAMV), 58–78 (IAGSALFTGVISLWLWFTVLF), 219–239 (IALTILLIALTIVFLLATATL), and 254–274 (VLVALLVCLIPTTIGGLLSAI). The 4-aspartylphosphate intermediate role is filled by Asp-307. ATP contacts are provided by residues Asp-344, Glu-348, 377–384 (FTAQSRMS), and Lys-395. Mg(2+)-binding residues include Asp-518 and Asp-522. Helical transmembrane passes span 588-608 (FAIIPAAFAATYPQLNALNVM), 616-636 (AILSAVIFNALIIIFLIPLAL), and 662-682 (LVVPFIGIKVIDVLLTLLGLA).

It belongs to the cation transport ATPase (P-type) (TC 3.A.3) family. Type IA subfamily. As to quaternary structure, the system is composed of three essential subunits: KdpA, KdpB and KdpC.

Its subcellular location is the cell inner membrane. The catalysed reaction is K(+)(out) + ATP + H2O = K(+)(in) + ADP + phosphate + H(+). Part of the high-affinity ATP-driven potassium transport (or Kdp) system, which catalyzes the hydrolysis of ATP coupled with the electrogenic transport of potassium into the cytoplasm. This subunit is responsible for energy coupling to the transport system and for the release of the potassium ions to the cytoplasm. This chain is Potassium-transporting ATPase ATP-binding subunit, found in Salmonella paratyphi A (strain ATCC 9150 / SARB42).